Here is a 494-residue protein sequence, read N- to C-terminus: MSTGTFVVSQPLNYRGGARVEPVDASGTEKAFEPATGRVIATFACSGEKEVNLAVENAKAAFKLWSKKSGLERCQVLLEAARIIKERKDEIATVETINNGKSIFEARLDVDTCWQCLEYYAGLAASMAGEHIQLPGGSFGYTRREPLGVCVGIGAWNYPFQIACWKSAPALACGNAMIFKPSPFTPVSALLLAEIYTKAGAPPGLFNVVQGGAATGQFLCHHREVAKISFTGSVPTGVKIMEMSAKGVKPITLELGGKSPLIIFSDCNMENAVKGALMANFLTQGQVCCNGTRVFVQKEIADKFINEVVKQTQKIKLGDPLLEDTRMGPLINAPHLERVLGFVKLAKEQGATVLCGGEVYVPEDPKLKHGYYMTPCILTNCRDDMTCVKEEIFGPVMSILTFGTEAEVLERANDTTFGLAAGVFTRDIQRAHRVAAELQAGTCYINNYNVSPVELPFGGYKKSGFGRENGRVTIEYYSQLKTVCVEMGDVESAF.

An N-acetylserine modification is found at Ser2. Lys30 bears the N6-acetyllysine; alternate mark. An N6-succinyllysine; alternate modification is found at Lys30. The residue at position 59 (Lys59) is an N6-succinyllysine. NAD(+) contacts are provided by residues Lys180 and 232 to 236; that span reads GSVPT. Glu254 acts as the Proton acceptor in catalysis. Cys288 functions as the Nucleophile in the catalytic mechanism. Lys298 bears the N6-acetyllysine mark. Lys303 is subject to N6-acetyllysine; alternate. Residue Lys303 is modified to N6-succinyllysine; alternate. The residue at position 344 (Lys344) is an N6-acetyllysine. Residue Glu391 participates in NAD(+) binding.

The protein belongs to the aldehyde dehydrogenase family. As to quaternary structure, homotetramer.

Its subcellular location is the cytoplasm. The protein localises to the cytosol. It catalyses the reaction 4-(trimethylamino)butanal + NAD(+) + H2O = 4-(trimethylamino)butanoate + NADH + 2 H(+). It carries out the reaction an aldehyde + NAD(+) + H2O = a carboxylate + NADH + 2 H(+). The catalysed reaction is 4-aminobutanal + NAD(+) + H2O = 4-aminobutanoate + NADH + 2 H(+). The enzyme catalyses formaldehyde + NAD(+) + H2O = formate + NADH + 2 H(+). It catalyses the reaction acetaldehyde + NAD(+) + H2O = acetate + NADH + 2 H(+). It carries out the reaction imidazole-4-acetaldehyde + NAD(+) + H2O = imidazole-4-acetate + NADH + 2 H(+). The catalysed reaction is acrolein + NAD(+) + H2O = acrylate + NADH + 2 H(+). The enzyme catalyses (5-hydroxyindol-3-yl)acetaldehyde + NAD(+) + H2O = (5-hydroxyindol-3-yl)acetate + NADH + 2 H(+). It catalyses the reaction 3,4-dihydroxyphenylacetaldehyde + NAD(+) + H2O = 3,4-dihydroxyphenylacetate + NADH + 2 H(+). It carries out the reaction spermine monoaldehyde + NAD(+) + H2O = N-(2-carboxyethyl)spermidine + NADH + 2 H(+). The catalysed reaction is propanal + NAD(+) + H2O = propanoate + NADH + 2 H(+). The enzyme catalyses butanal + NAD(+) + H2O = butanoate + NADH + 2 H(+). It catalyses the reaction pentanal + NAD(+) + H2O = pentanoate + NADH + 2 H(+). It carries out the reaction hexanal + NAD(+) + H2O = hexanoate + NADH + 2 H(+). Its pathway is amine and polyamine biosynthesis; carnitine biosynthesis. Functionally, converts gamma-trimethylaminobutyraldehyde into gamma-butyrobetaine with high efficiency (in vitro). Can catalyze the irreversible oxidation of a broad range of aldehydes to the corresponding acids in an NAD-dependent reaction, but with low efficiency. Catalyzes the oxidation of aldehydes arising from biogenic amines and polyamines. This Mus musculus (Mouse) protein is 4-trimethylaminobutyraldehyde dehydrogenase.